The sequence spans 175 residues: Disulfide bond formation protein B (175 aa).

The Cytoplasmic segment spans residues 1–13 (MTAFTRFAHSRAS). A helical membrane pass occupies residues 14–30 (WFILTGSAIALEAAALY). The Periplasmic portion of the chain corresponds to 31 to 48 (FQYVMKLDPCVMCIYQRL). A disulfide bridge links Cys40 with Cys43. A helical membrane pass occupies residues 49–64 (AVFGILASGLIGMTAP). The Cytoplasmic segment spans residues 65-71 (KFLIVRI). Residues 72 to 89 (LGAIGWAVSATWGLKLAL) traverse the membrane as a helical segment. Topologically, residues 90–144 (ALVDMQNNPSPFSTCSFLPEFPAWMPLHEWFPSVMLPTGMCTDVPWQFMGVTMAE) are periplasmic. The cysteines at positions 104 and 130 are disulfide-linked. A helical transmembrane segment spans residues 145 to 163 (WMVVAFSGYLVALLLFIVP). The Cytoplasmic portion of the chain corresponds to 164–175 (ILSGSNKPSLYK).

The protein belongs to the DsbB family.

It is found in the cell inner membrane. Required for disulfide bond formation in some periplasmic proteins. Acts by oxidizing the DsbA protein. The chain is Disulfide bond formation protein B from Shewanella sp. (strain ANA-3).